Reading from the N-terminus, the 1048-residue chain is MIEWIIRRSVANRFLVMMGALFLSIWGTWTIINTPVDALPDLSDVQVIIKTSYPGQAPQIVENQVTYPLTTTMLSVPGAKTVRGFSQFGDSYVYVIFEDGTDLYWARSRVLEYLNQVQGKLPAGVSSEIGPDATGVGWIFEYALVDRSGKHDLSELRSLQDWFLKFELKTIPNVAEVASVGGVVKQYQIQVNPVKLSQYGISLPEVKQALESSNQEAGGSSVEIAEAEYMVRASGYLQSIDDFNNIVLKTGENGVPVYLRDVARVQTGPEMRRGIAELNGQGEVAGGVVILRSGKNARDVITAVRDKLETLKASLPEGVEIVTTYDRSQLIDRAIDNLSSKLLEEFFVVAIVCALFLWHVRSALVAIISLPLGLCIAFIVMHFQGLNANIMSLGGIAIAVGAMVDAAIVMIENAHKRLEEWDHRHPGEQIDNVTRWKVITDASVEVGPALFISLLIITLSFIPIFTLEGQEGRLFGPLAFTKTYSMAGAAALAIIVIPILMGFWIRGKIPAETSNPLNRVLIKAYHPLLLRVLHWPKTTLLVAALSIFTVVWPLSQVGGEFLPKINEGDLLYMPSTLPGVSPAEAAALLQTTDKLIKSVPEVASVFGKTGKAETATDSAPLEMVETTIQLKPEDQWRPGMTIDKIIDELDRTVRLPGLANLWVPPIRNRIDMLSTGIKSPIGIKVSGTVLSDIDATAQSIEAVAKTVPGVVSVLAERLEGGRYIDIDINREKASRYGMTVGDVQLFVSSAIGGAMVGETVEGVARYPINIRYPQDYRNSPQALKQMPILTPMKQQITLGDVADINVVSGPTMLKTENARPASWIYVDARGRDMVSVVNDIKTAISEKVKLRPGTSVAFSGQFELLEHANKKLKLMVPMTVMIIFILLYLAFRRVDEALLILMSLPFALVGGIWFLYWQGFHMSVATGTGFIALAGVAAEFGVVMLMYLRHAIEAHPELSRKETFTPEGLDEALYHGAVLRVRPKAMTVAVIIAGLLPILWGTGAGSEVMSRIAAPMIGGMITAPLLSLFIIPAAYKLIWLRRHKKSVS.

The next 14 helical transmembrane spans lie at 14–34 (FLVM…IINT), 125–145 (VSSE…YALV), 338–358 (LSSK…LFLW), 363–383 (ALVA…VMHF), 391–411 (MSLG…IVMI), 446–466 (VGPA…PIFT), 485–505 (SMAG…GFWI), 539–559 (TLLV…QVGG), 737–757 (GMTV…AMVG), 871–891 (KLKL…YLAF), 897–917 (ALLI…FLYW), 928–948 (TGFI…LMYL), 985–1005 (AMTV…TGAG), and 1012–1032 (IAAP…FIIP).

Belongs to the resistance-nodulation-cell division (RND) (TC 2.A.6) family.

It localises to the cell inner membrane. Its function is as follows. Component of the sil cation-efflux system that confers resistance to silver. May be part of a three-component cation/proton antiporter. The sequence is that of Putative cation efflux system protein SilA (silA) from Salmonella typhimurium.